The following is a 155-amino-acid chain: Endoribonuclease YbeY (155 aa).

Histidine 114, histidine 118, and histidine 124 together coordinate Zn(2+).

Belongs to the endoribonuclease YbeY family. Requires Zn(2+) as cofactor.

The protein localises to the cytoplasm. Functionally, single strand-specific metallo-endoribonuclease involved in late-stage 70S ribosome quality control and in maturation of the 3' terminus of the 16S rRNA. This is Endoribonuclease YbeY from Enterobacter sp. (strain 638).